Reading from the N-terminus, the 227-residue chain is Cytochrome c oxidase subunit 2 (227 aa).

The Mitochondrial intermembrane portion of the chain corresponds to methionine 1–serine 14. The helical transmembrane segment at proline 15–methionine 45 threads the bilayer. Residues leucine 46–glutamine 59 are Mitochondrial matrix-facing. The chain crosses the membrane as a helical span at residues glutamate 60–methionine 87. Topologically, residues aspartate 88 to leucine 227 are mitochondrial intermembrane. Cu cation-binding residues include histidine 161, cysteine 196, glutamate 198, cysteine 200, histidine 204, and methionine 207. Glutamate 198 provides a ligand contact to Mg(2+). Residue tyrosine 218 is modified to Phosphotyrosine.

The protein belongs to the cytochrome c oxidase subunit 2 family. As to quaternary structure, component of the cytochrome c oxidase (complex IV, CIV), a multisubunit enzyme composed of 14 subunits. The complex is composed of a catalytic core of 3 subunits MT-CO1, MT-CO2 and MT-CO3, encoded in the mitochondrial DNA, and 11 supernumerary subunits COX4I, COX5A, COX5B, COX6A, COX6B, COX6C, COX7A, COX7B, COX7C, COX8 and NDUFA4, which are encoded in the nuclear genome. The complex exists as a monomer or a dimer and forms supercomplexes (SCs) in the inner mitochondrial membrane with NADH-ubiquinone oxidoreductase (complex I, CI) and ubiquinol-cytochrome c oxidoreductase (cytochrome b-c1 complex, complex III, CIII), resulting in different assemblies (supercomplex SCI(1)III(2)IV(1) and megacomplex MCI(2)III(2)IV(2)). Found in a complex with TMEM177, COA6, COX18, COX20, SCO1 and SCO2. Interacts with TMEM177 in a COX20-dependent manner. Interacts with COX20. Interacts with COX16. Cu cation is required as a cofactor.

It localises to the mitochondrion inner membrane. The catalysed reaction is 4 Fe(II)-[cytochrome c] + O2 + 8 H(+)(in) = 4 Fe(III)-[cytochrome c] + 2 H2O + 4 H(+)(out). In terms of biological role, component of the cytochrome c oxidase, the last enzyme in the mitochondrial electron transport chain which drives oxidative phosphorylation. The respiratory chain contains 3 multisubunit complexes succinate dehydrogenase (complex II, CII), ubiquinol-cytochrome c oxidoreductase (cytochrome b-c1 complex, complex III, CIII) and cytochrome c oxidase (complex IV, CIV), that cooperate to transfer electrons derived from NADH and succinate to molecular oxygen, creating an electrochemical gradient over the inner membrane that drives transmembrane transport and the ATP synthase. Cytochrome c oxidase is the component of the respiratory chain that catalyzes the reduction of oxygen to water. Electrons originating from reduced cytochrome c in the intermembrane space (IMS) are transferred via the dinuclear copper A center (CU(A)) of subunit 2 and heme A of subunit 1 to the active site in subunit 1, a binuclear center (BNC) formed by heme A3 and copper B (CU(B)). The BNC reduces molecular oxygen to 2 water molecules using 4 electrons from cytochrome c in the IMS and 4 protons from the mitochondrial matrix. The polypeptide is Cytochrome c oxidase subunit 2 (MT-CO2) (Rusa unicolor (Sambar)).